A 142-amino-acid polypeptide reads, in one-letter code: MCHAAPAAPASGRGLPHGGGNFSGAAGSRSVGATFEQRARQFLERRGLAFVAANVTMRGGELDLVMRTPDGTLVFVEVRARRSTRHGGAAASVGWRKRRRLVKAALHFWVRHGKGAACRFDVVAFEAGRLEWLHDAFRADDV.

The interval 1 to 23 is disordered; sequence MCHAAPAAPASGRGLPHGGGNFS.

The protein belongs to the UPF0102 family.

In Burkholderia ambifaria (strain ATCC BAA-244 / DSM 16087 / CCUG 44356 / LMG 19182 / AMMD) (Burkholderia cepacia (strain AMMD)), this protein is UPF0102 protein Bamb_0202.